The following is a 108-amino-acid chain: Thiosulfate sulfurtransferase GlpE (108 aa).

The 89-residue stretch at 17-105 (RQGAAVLVDI…WHRRFPANVA (89 aa)) folds into the Rhodanese domain. The Cysteine persulfide intermediate role is filled by Cys-65.

This sequence belongs to the GlpE family.

Its subcellular location is the cytoplasm. It carries out the reaction thiosulfate + hydrogen cyanide = thiocyanate + sulfite + 2 H(+). The enzyme catalyses thiosulfate + [thioredoxin]-dithiol = [thioredoxin]-disulfide + hydrogen sulfide + sulfite + 2 H(+). Transferase that catalyzes the transfer of sulfur from thiosulfate to thiophilic acceptors such as cyanide or dithiols. May function in a CysM-independent thiosulfate assimilation pathway by catalyzing the conversion of thiosulfate to sulfite, which can then be used for L-cysteine biosynthesis. This Salmonella agona (strain SL483) protein is Thiosulfate sulfurtransferase GlpE.